The primary structure comprises 1199 residues: Chromosome partition protein Smc (1199 aa).

Residue P32–N39 participates in ATP binding. A coiled-coil region spans residues G192 to M528. Residues P546–L658 enclose the SMC hinge domain. Positions I691–K1051 form a coiled coil.

Belongs to the SMC family. Homodimer.

It is found in the cytoplasm. In terms of biological role, required for chromosome condensation and partitioning. This is Chromosome partition protein Smc from Methanococcus voltae.